Here is a 571-residue protein sequence, read N- to C-terminus: Proline--tRNA ligase (571 aa).

Belongs to the class-II aminoacyl-tRNA synthetase family. ProS type 1 subfamily. Homodimer.

The protein localises to the cytoplasm. The catalysed reaction is tRNA(Pro) + L-proline + ATP = L-prolyl-tRNA(Pro) + AMP + diphosphate. Catalyzes the attachment of proline to tRNA(Pro) in a two-step reaction: proline is first activated by ATP to form Pro-AMP and then transferred to the acceptor end of tRNA(Pro). As ProRS can inadvertently accommodate and process non-cognate amino acids such as alanine and cysteine, to avoid such errors it has two additional distinct editing activities against alanine. One activity is designated as 'pretransfer' editing and involves the tRNA(Pro)-independent hydrolysis of activated Ala-AMP. The other activity is designated 'posttransfer' editing and involves deacylation of mischarged Ala-tRNA(Pro). The misacylated Cys-tRNA(Pro) is not edited by ProRS. In Shewanella putrefaciens (strain CN-32 / ATCC BAA-453), this protein is Proline--tRNA ligase.